The following is a 238-amino-acid chain: Purine nucleoside phosphorylase DeoD-type (238 aa).

His4 serves as a coordination point for a purine D-ribonucleoside. Phosphate is bound by residues Gly20, Arg24, Arg43, and 87-90 (RVGT). A purine D-ribonucleoside contacts are provided by residues 179 to 181 (EME) and 203 to 204 (SN).

Belongs to the PNP/UDP phosphorylase family. In terms of assembly, homohexamer; trimer of homodimers.

It carries out the reaction a purine D-ribonucleoside + phosphate = a purine nucleobase + alpha-D-ribose 1-phosphate. The catalysed reaction is a purine 2'-deoxy-D-ribonucleoside + phosphate = a purine nucleobase + 2-deoxy-alpha-D-ribose 1-phosphate. Its function is as follows. Catalyzes the reversible phosphorolytic breakdown of the N-glycosidic bond in the beta-(deoxy)ribonucleoside molecules, with the formation of the corresponding free purine bases and pentose-1-phosphate. The chain is Purine nucleoside phosphorylase DeoD-type from Lacticaseibacillus casei (strain BL23) (Lactobacillus casei).